The primary structure comprises 239 residues: Ribonuclease HII (239 aa).

Positions 18–231 constitute an RNase H type-2 domain; the sequence is KIIVGLDEAG…SKNLLKEIEE (214 aa). Residues D24, E25, and D125 each contribute to the a divalent metal cation site.

The protein belongs to the RNase HII family. It depends on Mn(2+) as a cofactor. Mg(2+) serves as cofactor.

It localises to the cytoplasm. The catalysed reaction is Endonucleolytic cleavage to 5'-phosphomonoester.. In terms of biological role, endonuclease that specifically degrades the RNA of RNA-DNA hybrids. The polypeptide is Ribonuclease HII (Methanococcus maripaludis (strain C7 / ATCC BAA-1331)).